Reading from the N-terminus, the 297-residue chain is MFHKGATAVTASAFSGYFVAVQREGIFHYSLEQGWRKLFRLKSKIHCISYIGPYLFGVGEKGTVIRSADEGKTWTMSSFPTNATVWAITGRNNGFVCAHGKHCIYVSDDFGVSWRVAKPFAEFHNPPVIRSLCLHGGNLFIGTQIHEYFGGIWAYDIKRDTVQVVKKEKNRMTASMLVFNENWLVAAMGSVKGKHGAVTVRNLLNGEEFTIQSSMIRNEESFLDLSEDDGIIYVTTTQDENGFSRIYQVDLEARSLKWFDTIKGHGWRVANQKENFFCAGLYECKFVQPYEVSAMIH.

This is an uncharacterized protein from Bacillus subtilis (strain 168).